A 367-amino-acid chain; its full sequence is NADH-quinone oxidoreductase subunit D (367 aa).

This sequence belongs to the complex I 49 kDa subunit family. NDH-1 is composed of 14 different subunits. Subunits NuoB, C, D, E, F, and G constitute the peripheral sector of the complex.

Its subcellular location is the cell membrane. The catalysed reaction is a quinone + NADH + 5 H(+)(in) = a quinol + NAD(+) + 4 H(+)(out). In terms of biological role, NDH-1 shuttles electrons from NADH, via FMN and iron-sulfur (Fe-S) centers, to quinones in the respiratory chain. The immediate electron acceptor for the enzyme in this species is believed to be a menaquinone. Couples the redox reaction to proton translocation (for every two electrons transferred, four hydrogen ions are translocated across the cytoplasmic membrane), and thus conserves the redox energy in a proton gradient. In Geobacillus kaustophilus (strain HTA426), this protein is NADH-quinone oxidoreductase subunit D.